Consider the following 239-residue polypeptide: Protein Thf1 (239 aa).

Positions 183–221 form a coiled coil; the sequence is ERVRKDLELYRSSLDRMKQARAVVEEMVKAARRQQERRQ. Residues 211-221 are compositionally biased toward basic and acidic residues; sequence KAARRQQERRQ. The disordered stretch occupies residues 211 to 239; the sequence is KAARRQQERRQSAASLPETSLGDPSKPGS.

Belongs to the THF1 family.

In terms of biological role, may be involved in photosynthetic membrane biogenesis. In Synechococcus sp. (strain JA-2-3B'a(2-13)) (Cyanobacteria bacterium Yellowstone B-Prime), this protein is Protein Thf1.